The sequence spans 428 residues: Tyrosine--tRNA ligase (428 aa).

Tyr41 serves as a coordination point for L-tyrosine. The 'HIGH' region motif lies at 46-55 (PTADSLHLGH). Residues Tyr179 and Gln183 each contribute to the L-tyrosine site. The 'KMSKS' region signature appears at 239 to 243 (KFGKT). Lys242 contributes to the ATP binding site. An S4 RNA-binding domain is found at 361–418 (TDLMQALVDAELQPSRGQARKTIASNAVTINGEKQSDPEYIFNDEDRLFGRYTLLRRG).

The protein belongs to the class-I aminoacyl-tRNA synthetase family. TyrS type 1 subfamily. In terms of assembly, homodimer.

Its subcellular location is the cytoplasm. It catalyses the reaction tRNA(Tyr) + L-tyrosine + ATP = L-tyrosyl-tRNA(Tyr) + AMP + diphosphate + H(+). Functionally, catalyzes the attachment of tyrosine to tRNA(Tyr) in a two-step reaction: tyrosine is first activated by ATP to form Tyr-AMP and then transferred to the acceptor end of tRNA(Tyr). This is Tyrosine--tRNA ligase from Salmonella arizonae (strain ATCC BAA-731 / CDC346-86 / RSK2980).